A 212-amino-acid polypeptide reads, in one-letter code: Adenylate kinase (212 aa).

10-15 (GAGKGT) is an ATP binding site. The tract at residues 30 to 59 (AIGDIFRTIIKTSTSEAELINNYVKQGELI) is NMP. AMP is bound by residues Arg36, 57–59 (ELI), 85–88 (GYPR), and Gln92. Residues 122–160 (GRYSCKNCGKIYNRYFVQPKTDNVCDVCGSSTFDYRKDD) form an LID region. Residue Arg123 coordinates ATP. Zn(2+) contacts are provided by Cys126 and Cys129. Residue 132 to 133 (IY) participates in ATP binding. Residues Cys146 and Cys149 each coordinate Zn(2+). AMP-binding residues include Arg157 and Arg168. Lys196 provides a ligand contact to ATP.

The protein belongs to the adenylate kinase family. In terms of assembly, monomer.

It is found in the cytoplasm. The enzyme catalyses AMP + ATP = 2 ADP. The protein operates within purine metabolism; AMP biosynthesis via salvage pathway; AMP from ADP: step 1/1. Its function is as follows. Catalyzes the reversible transfer of the terminal phosphate group between ATP and AMP. Plays an important role in cellular energy homeostasis and in adenine nucleotide metabolism. This chain is Adenylate kinase, found in Rickettsia conorii (strain ATCC VR-613 / Malish 7).